A 106-amino-acid polypeptide reads, in one-letter code: MSTAIAQQKIRIRLKAFDRRMLDLSCDKIIETADTTAASAIGPIPLPTKRKIYCVLRSPHVDKDSREHFETRTHRRIIDIYSPSAKTIDALMKLDLPSGVDIEVKL.

The protein belongs to the universal ribosomal protein uS10 family. As to quaternary structure, part of the 30S ribosomal subunit.

Functionally, involved in the binding of tRNA to the ribosomes. This chain is Small ribosomal subunit protein uS10, found in Synechococcus sp. (strain CC9902).